The chain runs to 426 residues: Serine hydroxymethyltransferase (426 aa).

(6S)-5,6,7,8-tetrahydrofolate-binding positions include leucine 115 and glycine 119 to isoleucine 121. Lysine 225 carries the post-translational modification N6-(pyridoxal phosphate)lysine.

Belongs to the SHMT family. As to quaternary structure, homodimer. It depends on pyridoxal 5'-phosphate as a cofactor.

Its subcellular location is the cytoplasm. It functions in the pathway amino-acid biosynthesis; glycine biosynthesis; glycine from L-serine: step 1/1. Its function is as follows. Catalyzes the reversible interconversion of serine and glycine with a modified folate serving as the one-carbon carrier. Also exhibits a pteridine-independent aldolase activity toward beta-hydroxyamino acids, producing glycine and aldehydes, via a retro-aldol mechanism. The protein is Serine hydroxymethyltransferase of Thermoplasma volcanium (strain ATCC 51530 / DSM 4299 / JCM 9571 / NBRC 15438 / GSS1).